A 393-amino-acid polypeptide reads, in one-letter code: DNA-directed RNA polymerase subunit Rpo1C (393 aa).

It belongs to the RNA polymerase beta' chain family. In terms of assembly, part of the 13-subunit RNA polymerase complex. Interacts with TFS4.

The protein localises to the cytoplasm. It carries out the reaction RNA(n) + a ribonucleoside 5'-triphosphate = RNA(n+1) + diphosphate. In terms of biological role, DNA-dependent RNA polymerase (RNAP) catalyzes the transcription of DNA into RNA using the four ribonucleoside triphosphates as substrates. Forms part of the jaw domain. Reconstitution experiments show this subunit is required for basic activity. The polypeptide is DNA-directed RNA polymerase subunit Rpo1C (Sulfolobus acidocaldarius (strain ATCC 33909 / DSM 639 / JCM 8929 / NBRC 15157 / NCIMB 11770)).